Consider the following 162-residue polypeptide: Inorganic pyrophosphatase (162 aa).

Glu-8 provides a ligand contact to Mg(2+). Residues Lys-16, Arg-30, and Tyr-42 each coordinate substrate. The Mg(2+) site is built by Asp-52, Asp-57, Asp-84, and Asp-89. Asp-89 acts as the Proton acceptor in catalysis. Tyr-126 serves as a coordination point for substrate.

Belongs to the PPase family. Homohexamer. Mg(2+) serves as cofactor.

It is found in the cytoplasm. The catalysed reaction is diphosphate + H2O = 2 phosphate + H(+). Catalyzes the hydrolysis of inorganic pyrophosphate (PPi) forming two phosphate ions. This is Inorganic pyrophosphatase from Mycobacterium leprae (strain TN).